A 172-amino-acid polypeptide reads, in one-letter code: NAD(P)H-quinone oxidoreductase subunit I, chloroplastic (172 aa).

4Fe-4S ferredoxin-type domains follow at residues glycine 55–lysine 84 and leucine 95–glutamate 124. Residues cysteine 64, cysteine 67, cysteine 70, cysteine 74, cysteine 104, cysteine 107, cysteine 110, and cysteine 114 each contribute to the [4Fe-4S] cluster site.

The protein belongs to the complex I 23 kDa subunit family. As to quaternary structure, NDH is composed of at least 16 different subunits, 5 of which are encoded in the nucleus. [4Fe-4S] cluster serves as cofactor.

Its subcellular location is the plastid. The protein resides in the chloroplast thylakoid membrane. It carries out the reaction a plastoquinone + NADH + (n+1) H(+)(in) = a plastoquinol + NAD(+) + n H(+)(out). The catalysed reaction is a plastoquinone + NADPH + (n+1) H(+)(in) = a plastoquinol + NADP(+) + n H(+)(out). In terms of biological role, NDH shuttles electrons from NAD(P)H:plastoquinone, via FMN and iron-sulfur (Fe-S) centers, to quinones in the photosynthetic chain and possibly in a chloroplast respiratory chain. The immediate electron acceptor for the enzyme in this species is believed to be plastoquinone. Couples the redox reaction to proton translocation, and thus conserves the redox energy in a proton gradient. This Crucihimalaya wallichii (Rock-cress) protein is NAD(P)H-quinone oxidoreductase subunit I, chloroplastic.